A 721-amino-acid polypeptide reads, in one-letter code: Dipeptidyl-peptidase 5 (721 aa).

An N-terminal signal peptide occupies residues 1–18 (MGAFRWLSIAAAASTALA). 4 N-linked (GlcNAc...) asparagine glycosylation sites follow: Asn-75, Asn-94, Asn-151, and Asn-254. Residues 271–297 (ARPINGPDSPGTPKGIKGDSSSPVFSP) form a disordered region. 2 N-linked (GlcNAc...) asparagine glycosylation sites follow: Asn-380 and Asn-450. Ser-560 acts as the Charge relay system in catalysis. Asn-607 is a glycosylation site (N-linked (GlcNAc...) asparagine). Active-site charge relay system residues include Asp-643 and His-675.

The protein belongs to the peptidase S9C family. In terms of processing, N-glycosylated. As to expression, expressed in mycelia and conidia.

The protein localises to the secreted. Functionally, may be involved in metabolism of dipeptides or may affect host defense mechanisms. Has a substrate specificity limited to the hydrolysis of X-Ala, His-Ser, and Ser-Tyr dipeptides at a neutral pH optimum. This is Dipeptidyl-peptidase 5 from Aspergillus fumigatus (strain CBS 144.89 / FGSC A1163 / CEA10) (Neosartorya fumigata).